The following is a 338-amino-acid chain: Holliday junction branch migration complex subunit RuvB (338 aa).

The large ATPase domain (RuvB-L) stretch occupies residues 1-180 (MTRLVTPDIT…FGVISRLEFY (180 aa)). Residues Leu-19, Arg-20, Gly-61, Lys-64, Thr-65, Thr-66, 127–129 (EDY), Arg-170, Tyr-180, and Arg-217 each bind ATP. Thr-65 provides a ligand contact to Mg(2+). Residues 181–251 (TDDELTTIVT…VVDESLKLLE (71 aa)) are small ATPAse domain (RuvB-S). The head domain (RuvB-H) stretch occupies residues 254 to 338 (EKGFDHMDRT…PPSSSQGNLF (85 aa)). Arg-290, Arg-309, and Arg-314 together coordinate DNA.

It belongs to the RuvB family. In terms of assembly, homohexamer. Forms an RuvA(8)-RuvB(12)-Holliday junction (HJ) complex. HJ DNA is sandwiched between 2 RuvA tetramers; dsDNA enters through RuvA and exits via RuvB. An RuvB hexamer assembles on each DNA strand where it exits the tetramer. Each RuvB hexamer is contacted by two RuvA subunits (via domain III) on 2 adjacent RuvB subunits; this complex drives branch migration. In the full resolvosome a probable DNA-RuvA(4)-RuvB(12)-RuvC(2) complex forms which resolves the HJ.

The protein localises to the cytoplasm. The catalysed reaction is ATP + H2O = ADP + phosphate + H(+). In terms of biological role, the RuvA-RuvB-RuvC complex processes Holliday junction (HJ) DNA during genetic recombination and DNA repair, while the RuvA-RuvB complex plays an important role in the rescue of blocked DNA replication forks via replication fork reversal (RFR). RuvA specifically binds to HJ cruciform DNA, conferring on it an open structure. The RuvB hexamer acts as an ATP-dependent pump, pulling dsDNA into and through the RuvAB complex. RuvB forms 2 homohexamers on either side of HJ DNA bound by 1 or 2 RuvA tetramers; 4 subunits per hexamer contact DNA at a time. Coordinated motions by a converter formed by DNA-disengaged RuvB subunits stimulates ATP hydrolysis and nucleotide exchange. Immobilization of the converter enables RuvB to convert the ATP-contained energy into a lever motion, pulling 2 nucleotides of DNA out of the RuvA tetramer per ATP hydrolyzed, thus driving DNA branch migration. The RuvB motors rotate together with the DNA substrate, which together with the progressing nucleotide cycle form the mechanistic basis for DNA recombination by continuous HJ branch migration. Branch migration allows RuvC to scan DNA until it finds its consensus sequence, where it cleaves and resolves cruciform DNA. In Geobacter metallireducens (strain ATCC 53774 / DSM 7210 / GS-15), this protein is Holliday junction branch migration complex subunit RuvB.